Consider the following 77-residue polypeptide: Immune protein Tsi2 (77 aa).

In terms of assembly, forms a heterotetramer with Tse2 consisting of two Tse2 dimers and two Tsi2 dimers. Formation of the complex inactivates Tse2 enzymatic activity.

Functionally, immunity protein that plays a role in preventing early activation of toxin Tse2. Binds to a large surface of Tse2 and thereby occludes the active site to specifically inhibits Tse2. In Pseudomonas aeruginosa (strain ATCC 15692 / DSM 22644 / CIP 104116 / JCM 14847 / LMG 12228 / 1C / PRS 101 / PAO1), this protein is Immune protein Tsi2.